The chain runs to 700 residues: Non-hemolytic phospholipase C (700 aa).

The segment at residues 1-34 (MTNQNRRDFLRLAAGTAGAAALQLFPPVIREALA) is a signal peptide (tat-type signal).

Belongs to the bacterial phospholipase C family. In terms of processing, predicted to be exported by the Tat system. The position of the signal peptide cleavage has not been experimentally proven.

The catalysed reaction is a 1,2-diacyl-sn-glycero-3-phosphocholine + H2O = phosphocholine + a 1,2-diacyl-sn-glycerol + H(+). Functionally, hydrolyzes phosphatidylserine as well as phosphatidylcholine. The sequence is that of Non-hemolytic phospholipase C (plcN) from Burkholderia pseudomallei (strain K96243).